We begin with the raw amino-acid sequence, 325 residues long: Protease HtpX homolog 2 (325 aa).

A run of 2 helical transmembrane segments spans residues 10–30 (LNMA…ALAV) and 41–61 (VGLI…QWLF). Histidine 147 provides a ligand contact to Zn(2+). Glutamate 148 is an active-site residue. Histidine 151 serves as a coordination point for Zn(2+). A run of 2 helical transmembrane segments spans residues 159–179 (LLMA…WLFW) and 196–216 (LVFL…LLVL). Zn(2+) is bound at residue glutamate 223.

Belongs to the peptidase M48B family. Zn(2+) is required as a cofactor.

Its subcellular location is the cell membrane. The sequence is that of Protease HtpX homolog 2 from Saccharolobus solfataricus (strain ATCC 35092 / DSM 1617 / JCM 11322 / P2) (Sulfolobus solfataricus).